The following is a 291-amino-acid chain: Ribosomal RNA small subunit methyltransferase A (291 aa).

S-adenosyl-L-methionine is bound by residues His21, Leu23, Gly48, Glu70, Asp95, and Asn115.

It belongs to the class I-like SAM-binding methyltransferase superfamily. rRNA adenine N(6)-methyltransferase family. RsmA subfamily.

It localises to the cytoplasm. It catalyses the reaction adenosine(1518)/adenosine(1519) in 16S rRNA + 4 S-adenosyl-L-methionine = N(6)-dimethyladenosine(1518)/N(6)-dimethyladenosine(1519) in 16S rRNA + 4 S-adenosyl-L-homocysteine + 4 H(+). Functionally, specifically dimethylates two adjacent adenosines (A1518 and A1519) in the loop of a conserved hairpin near the 3'-end of 16S rRNA in the 30S particle. May play a critical role in biogenesis of 30S subunits. This chain is Ribosomal RNA small subunit methyltransferase A, found in Prochlorococcus marinus (strain NATL2A).